Here is a 287-residue protein sequence, read N- to C-terminus: Protoheme IX farnesyltransferase (287 aa).

The next 7 helical transmembrane spans lie at 19 to 39 (LMVA…VTIT), 100 to 120 (MVLC…IVAV), 134 to 154 (FALL…WLAV), 162 to 182 (MLVV…WLHA), 212 to 232 (VWFH…LLEW), 233 to 253 (VGMR…AMLA), and 267 to 287 (VLCA…VSLF).

It belongs to the UbiA prenyltransferase family. Protoheme IX farnesyltransferase subfamily.

The protein resides in the cell inner membrane. The catalysed reaction is heme b + (2E,6E)-farnesyl diphosphate + H2O = Fe(II)-heme o + diphosphate. Its pathway is porphyrin-containing compound metabolism; heme O biosynthesis; heme O from protoheme: step 1/1. Converts heme B (protoheme IX) to heme O by substitution of the vinyl group on carbon 2 of heme B porphyrin ring with a hydroxyethyl farnesyl side group. The protein is Protoheme IX farnesyltransferase of Nitratidesulfovibrio vulgaris (strain ATCC 29579 / DSM 644 / CCUG 34227 / NCIMB 8303 / VKM B-1760 / Hildenborough) (Desulfovibrio vulgaris).